We begin with the raw amino-acid sequence, 268 residues long: Magnesium dechelatase SGR1, chloroplastic (268 aa).

The N-terminal 48 residues, 1-48, are a transit peptide targeting the chloroplast; the sequence is MCSLSAIMLLPTKLKPAYSDKRSNSSSSSSLFFNNRRSKKKNQSIVPV.

Belongs to the staygreen family. As to quaternary structure, interacts with HCAR, the chlorophyll catabolic enzymes (CCEs) NYC1, PAO and RCCR, and the LHCII complex. Part of a SGR1-CCE-LHCII complex, which acts in chlorophyll breakdown. As to expression, expressed in roots, leaves, seeds, flowers, buds, petals, sepals and siliques.

Its subcellular location is the plastid. It localises to the chloroplast thylakoid membrane. The catalysed reaction is chlorophyll a + 2 H(+) = pheophytin a + Mg(2+). Magnesium chelatase involved in chlorophyll a degradation in the chlorophyll-protein complexes of photosystem I (PSI) and photosystem II (PSII). Contributes to the degradation of PSI and PSII in the thylakoid membranes. Required to trigger chlorophyll degradation during natural and dark-induced leaf senescence. Mediates chlorophyll degradation during embryo degreening. Recombinant SGR1 possesses high dechelating activity against chlorophyll a, very low activity against chlorophyllide a, and no activity against chlorophyll b. Magnesium dechelation of chlorophyll a by SGR1 activates chlorophyll b degradation by inducing the expression of NYC1, an enzyme involved in chlorophyll b degradation. The protein is Magnesium dechelatase SGR1, chloroplastic of Arabidopsis thaliana (Mouse-ear cress).